A 758-amino-acid chain; its full sequence is POU domain, class 2, transcription factor 1 (758 aa).

Polar residues-rich tracts occupy residues 1–10 (MKLHSSSKIQ), 19–30 (RMNNPSETSKSP), and 275–285 (VQQLPQSQTTP). Disordered regions lie at residues 1–43 (MKLH…QTNG), 271–296 (AATP…LEEP), 377–398 (TNQS…RRKK), 450–472 (EKRI…LFSS), and 534–573 (SVLT…MTSS). Positions 294–368 (EEPSDLEELE…LLEKWLNDAE (75 aa)) constitute a POU-specific domain. Positions 395–454 (RRKKRTSIETNIRVALEKSFLENQKPTSEEITMIADQLNMEKEVIRVWFCNRRQKEKRIN) form a DNA-binding region, homeobox. The segment covering 455 to 472 (PPSSGGSSSSPIKSLFSS) has biased composition (low complexity).

This sequence belongs to the POU transcription factor family. Class-2 subfamily. Expressed in oocytes (at protein level). Expressed in the tadpole brain (at protein level).

The protein localises to the cytoplasm. Its subcellular location is the nucleus. Functionally, transcription factor that binds to the octamer motif (5'-ATTTGCAT-3') and activates the promoters of the genes of some small nuclear RNAs (snRNA) and histone H2B. In vitro does not bind to variant octamer sequences, such as the H2B octamer 5'-GTTTGCAT-3', although binding has been observed in vivo during early embryogenesis, suggesting that interactions between pou2f1 and other factors might be required for octamer-dependent H2B transcription. Acts downstream of Notch signaling during radial glia formation. May be important for gastrulation, possibly through the regulation of an FGF-type signaling pathway. This chain is POU domain, class 2, transcription factor 1 (pou2f1), found in Xenopus laevis (African clawed frog).